The chain runs to 184 residues: CASP-like protein 1U1 (184 aa).

The Cytoplasmic portion of the chain corresponds to 1-30 (MSSTGTTLSASEGDKGFRNGAAPAKSKSHS). The helical transmembrane segment at 31 to 51 (TIALLRLLAFAATLSAFVTMI) threads the bilayer. Topologically, residues 52–76 (TNKQKITIGPFTRWSKWHYSDAFMW) are extracellular. The chain crosses the membrane as a helical span at residues 77–97 (FVVANCIAFIYLLFAAILGLI). Residues 98–111 (SHSPMLVKHLVILD) lie on the Cytoplasmic side of the membrane. Residues 112–132 (LIVSYMLFSAASAATAVAYIG) form a helical membrane-spanning segment. Over 133-154 (KNGISQPGWTAICGVFERYCHH) the chain is Extracellular. A helical membrane pass occupies residues 155 to 175 (VAGALVACFLGWLFLTIAVFL). The Cytoplasmic portion of the chain corresponds to 176–184 (GMRRSPAAV).

Belongs to the Casparian strip membrane proteins (CASP) family. Homodimer and heterodimers.

The protein resides in the cell membrane. This is CASP-like protein 1U1 from Marchantia polymorpha (Common liverwort).